A 252-amino-acid polypeptide reads, in one-letter code: 3-dehydroquinate dehydratase (252 aa).

3-dehydroquinate-binding positions include 46–48 (EWR) and Arg-82. Catalysis depends on His-143, which acts as the Proton donor/acceptor. The Schiff-base intermediate with substrate role is filled by Lys-170. 3 residues coordinate 3-dehydroquinate: Arg-212, Ser-231, and Gln-235.

This sequence belongs to the type-I 3-dehydroquinase family. In terms of assembly, homodimer.

It catalyses the reaction 3-dehydroquinate = 3-dehydroshikimate + H2O. Its pathway is metabolic intermediate biosynthesis; chorismate biosynthesis; chorismate from D-erythrose 4-phosphate and phosphoenolpyruvate: step 3/7. Functionally, involved in the third step of the chorismate pathway, which leads to the biosynthesis of aromatic amino acids. Catalyzes the cis-dehydration of 3-dehydroquinate (DHQ) and introduces the first double bond of the aromatic ring to yield 3-dehydroshikimate. This is 3-dehydroquinate dehydratase from Listeria monocytogenes serotype 4b (strain F2365).